The following is a 123-amino-acid chain: Large ribosomal subunit protein bL12 (123 aa).

This sequence belongs to the bacterial ribosomal protein bL12 family. As to quaternary structure, homodimer. Part of the ribosomal stalk of the 50S ribosomal subunit. Forms a multimeric L10(L12)X complex, where L10 forms an elongated spine to which 2 to 4 L12 dimers bind in a sequential fashion. Binds GTP-bound translation factors.

Its function is as follows. Forms part of the ribosomal stalk which helps the ribosome interact with GTP-bound translation factors. Is thus essential for accurate translation. This Burkholderia vietnamiensis (strain G4 / LMG 22486) (Burkholderia cepacia (strain R1808)) protein is Large ribosomal subunit protein bL12.